Here is a 163-residue protein sequence, read N- to C-terminus: 2-C-methyl-D-erythritol 2,4-cyclodiphosphate synthase (163 aa).

Residues Asp15 and His17 each coordinate a divalent metal cation. Residues 15 to 17 (DFH) and 41 to 42 (HS) each bind 4-CDP-2-C-methyl-D-erythritol 2-phosphate. His49 lines the a divalent metal cation pocket. Residues 63–65 (DIG) and 139–142 (TTNE) each bind 4-CDP-2-C-methyl-D-erythritol 2-phosphate.

The protein belongs to the IspF family. In terms of assembly, homotrimer. Requires a divalent metal cation as cofactor.

It catalyses the reaction 4-CDP-2-C-methyl-D-erythritol 2-phosphate = 2-C-methyl-D-erythritol 2,4-cyclic diphosphate + CMP. It participates in isoprenoid biosynthesis; isopentenyl diphosphate biosynthesis via DXP pathway; isopentenyl diphosphate from 1-deoxy-D-xylulose 5-phosphate: step 4/6. Functionally, involved in the biosynthesis of isopentenyl diphosphate (IPP) and dimethylallyl diphosphate (DMAPP), two major building blocks of isoprenoid compounds. Catalyzes the conversion of 4-diphosphocytidyl-2-C-methyl-D-erythritol 2-phosphate (CDP-ME2P) to 2-C-methyl-D-erythritol 2,4-cyclodiphosphate (ME-CPP) with a corresponding release of cytidine 5-monophosphate (CMP). The sequence is that of 2-C-methyl-D-erythritol 2,4-cyclodiphosphate synthase from Gloeobacter violaceus (strain ATCC 29082 / PCC 7421).